A 546-amino-acid polypeptide reads, in one-letter code: Chaperonin GroEL (546 aa).

ATP contacts are provided by residues 30–33 (TLGP), K51, 87–91 (DGTTT), G415, and D495.

The protein belongs to the chaperonin (HSP60) family. As to quaternary structure, forms a cylinder of 14 subunits composed of two heptameric rings stacked back-to-back. Interacts with the co-chaperonin GroES.

It localises to the cytoplasm. The enzyme catalyses ATP + H2O + a folded polypeptide = ADP + phosphate + an unfolded polypeptide.. Together with its co-chaperonin GroES, plays an essential role in assisting protein folding. The GroEL-GroES system forms a nano-cage that allows encapsulation of the non-native substrate proteins and provides a physical environment optimized to promote and accelerate protein folding. The chain is Chaperonin GroEL from Brucella melitensis biotype 1 (strain ATCC 23456 / CCUG 17765 / NCTC 10094 / 16M).